A 302-amino-acid polypeptide reads, in one-letter code: Phosphoribosylaminoimidazole-succinocarboxamide synthase (302 aa).

It belongs to the SAICAR synthetase family.

It carries out the reaction 5-amino-1-(5-phospho-D-ribosyl)imidazole-4-carboxylate + L-aspartate + ATP = (2S)-2-[5-amino-1-(5-phospho-beta-D-ribosyl)imidazole-4-carboxamido]succinate + ADP + phosphate + 2 H(+). It functions in the pathway purine metabolism; IMP biosynthesis via de novo pathway; 5-amino-1-(5-phospho-D-ribosyl)imidazole-4-carboxamide from 5-amino-1-(5-phospho-D-ribosyl)imidazole-4-carboxylate: step 1/2. This chain is Phosphoribosylaminoimidazole-succinocarboxamide synthase, found in Leptothrix cholodnii (strain ATCC 51168 / LMG 8142 / SP-6) (Leptothrix discophora (strain SP-6)).